We begin with the raw amino-acid sequence, 426 residues long: MISHFLNFLKFNGTPGEYGSPLWATVYILVIFGVASVAVMLMTYLERKVLAHMQIRLGPMRVGPHGLLQPIADALKLLIKEDIVPDGADKFLFWMAPVTVMMTAFTTYLVIPFGRSHAVTDMNIGVLFMIGISSLGVLAVVMAGWSSNSKYALMGGLRSAAQMVSYEVAMGLAIVSVLMMTSLQTGTGTLSMIGIVQAQQAQGSWFIFKFFPTGLVAFVIFAIAMVAETNRAPFDLPEAESELTAGFHTEYSGFRWSLFFLGEYVAMIAVSSIAVTLWLGGWLRPFPNALSGATWDFAFSVFPALLFFVLAAGCFIGWVRMPSKPAFKVQAIGLGIFGVLLGMIGAVLLIPAVRVRVSDIFWFSAKVGVFMYLYIWYRGTFPRYRFDQLMKIGWKVLLPVSLGVLIVTAVLGVRHELIAGLMGVAR.

A run of 10 helical transmembrane segments spans residues leucine 22–methionine 42, phenylalanine 91–isoleucine 111, isoleucine 124–glycine 144, methionine 163–leucine 183, phenylalanine 206–valine 226, leucine 258–tryptophan 278, phenylalanine 299–valine 319, alanine 331–proline 351, valine 357–tyrosine 377, and isoleucine 392–glycine 412.

Belongs to the complex I subunit 1 family. As to quaternary structure, NDH-1 is composed of 14 different subunits. Subunits NuoA, H, J, K, L, M, N constitute the membrane sector of the complex.

The protein resides in the cell inner membrane. It carries out the reaction a quinone + NADH + 5 H(+)(in) = a quinol + NAD(+) + 4 H(+)(out). Functionally, NDH-1 shuttles electrons from NADH, via FMN and iron-sulfur (Fe-S) centers, to quinones in the respiratory chain. The immediate electron acceptor for the enzyme in this species is believed to be ubiquinone. Couples the redox reaction to proton translocation (for every two electrons transferred, four hydrogen ions are translocated across the cytoplasmic membrane), and thus conserves the redox energy in a proton gradient. This subunit may bind ubiquinone. In Koribacter versatilis (strain Ellin345), this protein is NADH-quinone oxidoreductase subunit H 1.